The primary structure comprises 140 residues: Ubiquitin-like protein ATG12 (140 aa).

The interval 1-50 is disordered; that stretch reads MAEEPQSVLQLPTSIAAGGEGLTDVSPETTTPEPPSSAAVSPGTEEPAGD. The span at 25-42 shows a compositional bias: low complexity; that stretch reads VSPETTTPEPPSSAAVSP. Residue Gly-140 forms a Glycyl lysine isopeptide (Gly-Lys) (interchain with K-130 in ATG5) linkage.

Belongs to the ATG12 family. As to quaternary structure, forms a conjugate with ATG5. Part of the minor complex composed of 4 sets of ATG12-ATG5 and ATG16L1 (400 kDa); this complex interacts with ATG3 leading to disruption of ATG7 interaction and promotion of ATG8-like proteins lipidation. Forms an 800-kDa complex composed of ATG12-ATG5 and ATG16L2. Interacts with DHX58/RIG-1, IFIH1/MDA5 and MAVS/IPS-1 in monomeric form as well as in ATG12-ATG5 conjugate. The interaction with MAVS is further enhanced upon vesicular stomatitis virus (VSV) infection. Interacts with ATG3; this interaction is essential for phosphatidylethanolamine (PE)-conjugated ATG8-like proteins formation. Interacts with ATG7. Interacts with ATG10. The ATG12-ATG5 conjugate interacts with RAB33A; this interaction is bridged by ATG16L1 and promotes ATG12-ATG5-ATG16L1 complex recruitment to phagophores. Interacts with TECPR1. Interacts with SH3BGRL. The ATG12-ATG5 conjugate interacts with PDCD6IP (via the BRO1 domain); this interaction is bridged by ATG12 and promotes multiple PDCD6IP-mediated functions such as endolysosomal trafficking, macroautophagy and exosome biogenesis. In terms of processing, acetylated by EP300. Ubiquitous.

The protein localises to the cytoplasm. It localises to the preautophagosomal structure membrane. In terms of biological role, ubiquitin-like protein involved in autophagy vesicles formation. Conjugation with ATG5 through a ubiquitin-like conjugating system involving also ATG7 as an E1-like activating enzyme and ATG10 as an E2-like conjugating enzyme, is essential for its function. The ATG12-ATG5 conjugate acts as an E3-like enzyme which is required for lipidation of ATG8 family proteins and their association to the vesicle membranes. As part of the ATG8 conjugation system with ATG5 and ATG16L1, required for recruitment of LRRK2 to stressed lysosomes and induction of LRRK2 kinase activity in response to lysosomal stress. Functionally, (Microbial infection) May act as a proviral factor. In association with ATG5, negatively regulates the innate antiviral immune response by impairing the type I IFN production pathway upon vesicular stomatitis virus (VSV) infection. Required for the translation of incoming hepatitis C virus (HCV) RNA and, thereby, for the initiation of HCV replication, but not required once infection is established. This is Ubiquitin-like protein ATG12 from Homo sapiens (Human).